A 330-amino-acid polypeptide reads, in one-letter code: G-protein coupled bile acid receptor 1 (330 aa).

Topologically, residues 1–19 (MTPNSTGEVPSPIPKGALG) are extracellular. Asparagine 4 carries an N-linked (GlcNAc...) asparagine glycan. A helical membrane pass occupies residues 20-40 (LSLALASLIITANLLLALGIA). At 41–50 (WDRRLRSPPA) the chain is on the cytoplasmic side. The helical transmembrane segment at 51-71 (GCFFLSLLLAGLLTGLALPTL) threads the bilayer. Over 72 to 85 (PGLWNQSRRGYWSC) the chain is Extracellular. Asparagine 76 carries N-linked (GlcNAc...) asparagine glycosylation. Cysteine 85 and cysteine 155 form a disulfide bridge. Residues 86–106 (LLVYLAPNFSFLSLLANLLLV) traverse the membrane as a helical segment. The Cytoplasmic segment spans residues 107–125 (HGERYMAVLRPLQPPGSIR). A helical transmembrane segment spans residues 126 to 146 (LALLLTWAGPLLFASLPALGW). At 147–165 (NHWTPGANCSSQAIFPAPY) the chain is on the extracellular side. A helical transmembrane segment spans residues 166–186 (LYLEVYGLLLPAVGAAAFLSV). Topologically, residues 187-228 (RVLATAHRQLQDICRLERAVCRDEPSALARALTWRQARAQAG) are cytoplasmic. Residues 229 to 249 (AMLLFGLCWGPYVATLLLSVL) traverse the membrane as a helical segment. Residues 250-261 (AYEQRPPLGPGT) lie on the Extracellular side of the membrane. The helical transmembrane segment at 262 to 282 (LLSLLSLGSASAAAVPVAMGL) threads the bilayer. Residues 283–330 (GDQRYTAPWRAAAQRCLQGLWGRASRDSPGPSIAYHPSSQSSVDLDLN) are Cytoplasmic-facing. Positions 309 to 330 (DSPGPSIAYHPSSQSSVDLDLN) are disordered. Polar residues predominate over residues 319 to 330 (PSSQSSVDLDLN).

This sequence belongs to the G-protein coupled receptor 1 family. In terms of tissue distribution, ubiquitously expressed. Expressed at higher level in spleen and placenta. Expressed at lower level in other tissues. In digestive tissues, it is expressed in stomach, duodenum, ileocecum, ileum, jejunum, ascending colon, transverse colon, descending colon, cecum and liver, but not in esophagus and rectum.

It is found in the cell membrane. Its function is as follows. Receptor for bile acid. Bile acid-binding induces its internalization, activation of extracellular signal-regulated kinase and intracellular cAMP production. May be involved in the suppression of macrophage functions by bile acids. The polypeptide is G-protein coupled bile acid receptor 1 (GPBAR1) (Homo sapiens (Human)).